The following is a 283-amino-acid chain: NAD kinase (283 aa).

Asp-68 (proton acceptor) is an active-site residue. Residues Asp-68–Gly-69, Arg-73, Asn-142–Asp-143, Arg-153, Arg-170, Asp-172, and Thr-183–Ser-188 each bind NAD(+).

It belongs to the NAD kinase family. A divalent metal cation serves as cofactor.

It is found in the cytoplasm. It catalyses the reaction NAD(+) + ATP = ADP + NADP(+) + H(+). Its function is as follows. Involved in the regulation of the intracellular balance of NAD and NADP, and is a key enzyme in the biosynthesis of NADP. Catalyzes specifically the phosphorylation on 2'-hydroxyl of the adenosine moiety of NAD to yield NADP. In Symbiobacterium thermophilum (strain DSM 24528 / JCM 14929 / IAM 14863 / T), this protein is NAD kinase.